A 66-amino-acid polypeptide reads, in one-letter code: Toxin Boma6c (66 aa).

Positions 2-64 (RDAYIAQNYN…VPIRIPGKCH (63 aa)) constitute an LCN-type CS-alpha/beta domain. 4 cysteine pairs are disulfide-bonded: C12–C63, C16–C36, C22–C46, and C26–C48.

The protein belongs to the long (4 C-C) scorpion toxin superfamily. Sodium channel inhibitor family. Alpha subfamily. In terms of tissue distribution, expressed by the venom gland.

Its subcellular location is the secreted. Its function is as follows. Alpha toxins bind voltage-independently at site-3 of sodium channels (Nav) and inhibit the inactivation of the activated channels, thereby blocking neuronal transmission. The sequence is that of Toxin Boma6c from Buthus occitanus mardochei (Moroccan scorpion).